We begin with the raw amino-acid sequence, 364 residues long: Phosphoserine aminotransferase (364 aa).

Residue arginine 46 coordinates L-glutamate. Pyridoxal 5'-phosphate contacts are provided by residues alanine 80–arginine 81, tryptophan 106, threonine 157, aspartate 176, and glutamine 199. An N6-(pyridoxal phosphate)lysine modification is found at lysine 200. Residue asparagine 241–threonine 242 participates in pyridoxal 5'-phosphate binding.

Belongs to the class-V pyridoxal-phosphate-dependent aminotransferase family. SerC subfamily. In terms of assembly, homodimer. The cofactor is pyridoxal 5'-phosphate.

The protein resides in the cytoplasm. It carries out the reaction O-phospho-L-serine + 2-oxoglutarate = 3-phosphooxypyruvate + L-glutamate. The enzyme catalyses 4-(phosphooxy)-L-threonine + 2-oxoglutarate = (R)-3-hydroxy-2-oxo-4-phosphooxybutanoate + L-glutamate. It participates in amino-acid biosynthesis; L-serine biosynthesis; L-serine from 3-phospho-D-glycerate: step 2/3. It functions in the pathway cofactor biosynthesis; pyridoxine 5'-phosphate biosynthesis; pyridoxine 5'-phosphate from D-erythrose 4-phosphate: step 3/5. Functionally, catalyzes the reversible conversion of 3-phosphohydroxypyruvate to phosphoserine and of 3-hydroxy-2-oxo-4-phosphonooxybutanoate to phosphohydroxythreonine. The chain is Phosphoserine aminotransferase from Vibrio cholerae serotype O1 (strain ATCC 39315 / El Tor Inaba N16961).